The sequence spans 530 residues: MKSIIFNEIKKILECDFALENPKDKNLAHFATPLAFSLAKELKKSPMLIASDLASKFQNHDCFESVEAVNGYLNFRISKTFLNELANQALTNPNDFTKGEKKQESFLLEYVSANPTGPLHIGHARGAVFGDTLTRLARHLGYKFNTEYYVNDAGNQIYLLGLSILLSVKESILHENVEYPEQYYKGEYIADLAKEAFEKFGKEFFSQENIPSLADWAKDKMLVLIKQNLEQAKIKIDSYVSERSYYDALNATLESLKEHKGIYEQEGKIWLASSQKGDEKDRVIIREDGRGTYLAADIVYHKDKMSRGYGKCINIWGADHHGYIPRMKAAMEFLGFDSNNLEIILAQMVSLLKDGEPYKMSKRAGNFILMSDVVNEIGSDALRYIFLSKKCDTHLEFDISDLQKEDSSNPVYYINYAHARIHQVFAKAGKKIDDVMKADLQSLNQDGVNLLFEALNLKAVLNDAFEARALQKIPDYLKNLAANFHKFYNENKVVGSANENDLLKLFSLVALSIKTAFSLMGIEAKNKMEH.

The 'HIGH' region signature appears at 113 to 123 (ANPTGPLHIGH).

Belongs to the class-I aminoacyl-tRNA synthetase family. As to quaternary structure, monomer.

It localises to the cytoplasm. It catalyses the reaction tRNA(Arg) + L-arginine + ATP = L-arginyl-tRNA(Arg) + AMP + diphosphate. This is Arginine--tRNA ligase from Campylobacter jejuni (strain RM1221).